The sequence spans 149 residues: Peptide deformylase (149 aa).

Residues C92 and H134 each coordinate Fe cation. Residue E135 is part of the active site. H138 contacts Fe cation.

Belongs to the polypeptide deformylase family. It depends on Fe(2+) as a cofactor.

It carries out the reaction N-terminal N-formyl-L-methionyl-[peptide] + H2O = N-terminal L-methionyl-[peptide] + formate. Its function is as follows. Removes the formyl group from the N-terminal Met of newly synthesized proteins. Requires at least a dipeptide for an efficient rate of reaction. N-terminal L-methionine is a prerequisite for activity but the enzyme has broad specificity at other positions. In Buchnera aphidicola subsp. Cinara cedri (strain Cc), this protein is Peptide deformylase.